The chain runs to 84 residues: Defensin-like protein 116 (84 aa).

The N-terminal stretch at 1–24 is a signal peptide; it reads MAITKNMLVVLLLTIIFVTSSVHC. Disulfide bonds link C40–C80, C46–C71, C55–C78, and C59–C79.

Belongs to the DEFL family.

It is found in the secreted. This chain is Defensin-like protein 116, found in Arabidopsis thaliana (Mouse-ear cress).